A 244-amino-acid polypeptide reads, in one-letter code: Capsid protein (244 aa).

The short motif at 1 to 24 (MSTSKRKRADEAQWNKRSTKKKGS) is the Bipartite nuclear localization signal element. Positions 1-39 (MSTSKRKRADEAQWNKRSTKKKGSAPQAKKPGGKGERPS) are disordered.

The protein belongs to the geminiviridae capsid protein family. As to quaternary structure, homomultimer. Interacts with the movement protein. Binds to single-stranded and double-stranded viral DNA.

The protein localises to the virion. The protein resides in the host nucleus. In terms of biological role, encapsidates the viral genome into characteristic twinned ('geminate') particles. Binds the genomic viral ssDNA and shuttles it into and out of the cell nucleus. Plays a role in protection of the genome from degradation, virus acquisition and transmission by insect vectors, infectivity, and systemic movement. The CP of monopartite geminiviruses is absolutely essential for virus movement. The sequence is that of Capsid protein from Avena sativa (Oat).